The sequence spans 283 residues: CASP-like protein 4A3 (283 aa).

A disordered region spans residues 1 to 86; the sequence is MRSPAKTMPS…VEETPSPIVV (86 aa). Residues 1–135 are Cytoplasmic-facing; it reads MRSPAKTMPS…SRREEVVKFS (135 aa). The segment covering 9–20 has biased composition (low complexity); it reads PSMSPSSVSTEK. Residues 50–79 show a composition bias toward basic and acidic residues; that stretch reads SLDHSSESEKEDAKSKPESRRNKNPGKVEE. The helical transmembrane segment at 136–156 threads the bilayer; sequence ALGFRLSEVVLALISFSIMAA. The Extracellular segment spans residues 157 to 174; it reads DKTKGWSGDSFDRYKEYR. The helical transmembrane segment at 175–195 threads the bilayer; it reads FCLSVNVVAFVYSSFQACDLA. Residues 196–212 are Cytoplasmic-facing; it reads YHLVKEKHLISHHLRPL. A helical transmembrane segment spans residues 213–233; that stretch reads FEFIIDQVLAYLLMSASTAAV. The Extracellular segment spans residues 234–251; that stretch reads TRVDDWVSNWGKDEFTEM. Residues 252–272 form a helical membrane-spanning segment; sequence ASASIAMSFLAFLAFAFSSLI. Over 273 to 283 the chain is Cytoplasmic; it reads SGYNLFNQGSL.

The protein belongs to the Casparian strip membrane proteins (CASP) family. As to quaternary structure, homodimer and heterodimers.

The protein resides in the cell membrane. This chain is CASP-like protein 4A3, found in Arabidopsis thaliana (Mouse-ear cress).